Reading from the N-terminus, the 535-residue chain is Growth-regulating factor 2 (535 aa).

Residues 164–199 (PFTLTQWAELEQQALIYKYITANVPVPSSLLISIKK) enclose the QLQ domain. The region spanning 227 to 271 (DPEPGRCRRTDGKKWRCSRDAVPDQKYCERHINRGRHRSRKPVEV) is the WRC domain. 2 short sequence motifs (bipartite nuclear localization signal) span residues 232-242 (RCRRTDGKKWR) and 260-267 (RGRHRSRK). Disordered stretches follow at residues 260 to 308 (RGRH…ASSN), 417 to 437 (PIAS…EKTT), and 514 to 535 (SSVS…HYTT). Residues 272–291 (QSGQNQTAAAASKAVTTPQQ) show a composition bias toward polar residues. Positions 299-308 (NRSNARASSN) are enriched in low complexity. A compositionally biased stretch (polar residues) spans 426–437 (THNNNNAQEKTT).

Belongs to the GRF family. As to quaternary structure, interacts with GIF1. In terms of tissue distribution, strongly expressed in actively growing and developing tissues, such as roots, upper stems, and shoot tips containing the shoot apical meristem (SAM) and flower buds. Detected in young leaf primordium. Also expressed in mature flowers, but weakly expressed in mature stems and leaves.

It localises to the nucleus. Its function is as follows. Transcription activator that plays a role in the regulation of cell expansion in leaf and cotyledons tissues. Component of a network formed by miR396, the GRFs and their interacting factors (GIFs) acting in the regulation of meristem function, at least partially through the control of cell proliferation. The sequence is that of Growth-regulating factor 2 (GRF2) from Arabidopsis thaliana (Mouse-ear cress).